The following is a 489-amino-acid chain: Siroheme synthase (489 aa).

Residues 1-203 (MDFFPVFMRL…GREDAARETL (203 aa)) form a precorrin-2 dehydrogenase /sirohydrochlorin ferrochelatase region. Residues 22 to 23 (PV) and 43 to 44 (PA) each bind NAD(+). Positions 218-489 (GEVFLVGAGP…ARSSTEGAEA (272 aa)) are uroporphyrinogen-III C-methyltransferase. An S-adenosyl-L-methionine-binding site is contributed by Pro227. Asp250 (proton acceptor) is an active-site residue. The Proton donor role is filled by Lys272. S-adenosyl-L-methionine-binding positions include 303-305 (GGD), Ile308, 333-334 (TA), Met385, and Gly414.

It in the N-terminal section; belongs to the precorrin-2 dehydrogenase / sirohydrochlorin ferrochelatase family. The protein in the C-terminal section; belongs to the precorrin methyltransferase family.

The enzyme catalyses uroporphyrinogen III + 2 S-adenosyl-L-methionine = precorrin-2 + 2 S-adenosyl-L-homocysteine + H(+). It catalyses the reaction precorrin-2 + NAD(+) = sirohydrochlorin + NADH + 2 H(+). The catalysed reaction is siroheme + 2 H(+) = sirohydrochlorin + Fe(2+). It participates in cofactor biosynthesis; adenosylcobalamin biosynthesis; precorrin-2 from uroporphyrinogen III: step 1/1. Its pathway is cofactor biosynthesis; adenosylcobalamin biosynthesis; sirohydrochlorin from precorrin-2: step 1/1. The protein operates within porphyrin-containing compound metabolism; siroheme biosynthesis; precorrin-2 from uroporphyrinogen III: step 1/1. It functions in the pathway porphyrin-containing compound metabolism; siroheme biosynthesis; siroheme from sirohydrochlorin: step 1/1. It participates in porphyrin-containing compound metabolism; siroheme biosynthesis; sirohydrochlorin from precorrin-2: step 1/1. In terms of biological role, multifunctional enzyme that catalyzes the SAM-dependent methylations of uroporphyrinogen III at position C-2 and C-7 to form precorrin-2 via precorrin-1. Then it catalyzes the NAD-dependent ring dehydrogenation of precorrin-2 to yield sirohydrochlorin. Finally, it catalyzes the ferrochelation of sirohydrochlorin to yield siroheme. The polypeptide is Siroheme synthase (Thioalkalivibrio sulfidiphilus (strain HL-EbGR7)).